The chain runs to 301 residues: ATP synthase gamma chain (301 aa).

The protein belongs to the ATPase gamma chain family. F-type ATPases have 2 components, CF(1) - the catalytic core - and CF(0) - the membrane proton channel. CF(1) has five subunits: alpha(3), beta(3), gamma(1), delta(1), epsilon(1). CF(0) has three main subunits: a, b and c.

The protein localises to the cell inner membrane. Its function is as follows. Produces ATP from ADP in the presence of a proton gradient across the membrane. The gamma chain is believed to be important in regulating ATPase activity and the flow of protons through the CF(0) complex. The polypeptide is ATP synthase gamma chain (Helicobacter acinonychis (strain Sheeba)).